The primary structure comprises 640 residues: tRNA-dihydrouridine(47) synthase [NAD(P)(+)]-like (640 aa).

The span at 1–10 (MAEVAEVAAE) shows a compositional bias: low complexity. 2 disordered regions span residues 1-22 (MAEV…VGAC) and 47-106 (DKQE…PHMK). Ala2 bears the N-acetylalanine mark. Over residues 64–91 (PEAKRIRLEDGQENGKTEVAVESHERQV) the composition is skewed to basic and acidic residues. Residues 92 to 106 (PKRARGQNKSRPHMK) show a composition bias toward basic residues. C3H1-type zinc fingers lie at residues 110-140 (YDKE…HDVG) and 148-178 (ADLG…HLGP). Phosphoserine is present on Ser267. Residues 301 to 303 (PLT) and Gln355 contribute to the FMN site. Residue Cys386 is the Proton donor of the active site. Lys406 is covalently cross-linked (Glycyl lysine isopeptide (Lys-Gly) (interchain with G-Cter in SUMO2)). Residues Lys425, His455, 487 to 489 (NGD), and 510 to 511 (AR) contribute to the FMN site.

Belongs to the Dus family. Dus3 subfamily. Requires FMN as cofactor.

The catalysed reaction is 5,6-dihydrouridine(47) in tRNA + NAD(+) = uridine(47) in tRNA + NADH + H(+). It carries out the reaction 5,6-dihydrouridine(47) in tRNA + NADP(+) = uridine(47) in tRNA + NADPH + H(+). It catalyses the reaction a 5,6-dihydrouridine in mRNA + NAD(+) = a uridine in mRNA + NADH + H(+). The enzyme catalyses a 5,6-dihydrouridine in mRNA + NADP(+) = a uridine in mRNA + NADPH + H(+). In terms of biological role, catalyzes the synthesis of dihydrouridine, a modified base, in various RNAs, such as tRNAs, mRNAs and some long non-coding RNAs (lncRNAs). Mainly modifies the uridine in position 47 (U47) in the D-loop of most cytoplasmic tRNAs. Also able to mediate the formation of dihydrouridine in some mRNAs, thereby regulating their translation. The sequence is that of tRNA-dihydrouridine(47) synthase [NAD(P)(+)]-like from Rattus norvegicus (Rat).